Here is a 306-residue protein sequence, read N- to C-terminus: Acetyl-coenzyme A carboxylase carboxyl transferase subunit beta (306 aa).

In terms of domain architecture, CoA carboxyltransferase N-terminal spans 27–296; that stretch reads LWHKCPSCEA…PKFVAAPIEP (270 aa). Zn(2+) contacts are provided by cysteine 31, cysteine 34, cysteine 50, and cysteine 53. A C4-type zinc finger spans residues 31–53; the sequence is CPSCEAVLYRPELEKTLDVCPKC.

The protein belongs to the AccD/PCCB family. Acetyl-CoA carboxylase is a heterohexamer composed of biotin carboxyl carrier protein (AccB), biotin carboxylase (AccC) and two subunits each of ACCase subunit alpha (AccA) and ACCase subunit beta (AccD). The cofactor is Zn(2+).

It is found in the cytoplasm. It catalyses the reaction N(6)-carboxybiotinyl-L-lysyl-[protein] + acetyl-CoA = N(6)-biotinyl-L-lysyl-[protein] + malonyl-CoA. It participates in lipid metabolism; malonyl-CoA biosynthesis; malonyl-CoA from acetyl-CoA: step 1/1. Its function is as follows. Component of the acetyl coenzyme A carboxylase (ACC) complex. Biotin carboxylase (BC) catalyzes the carboxylation of biotin on its carrier protein (BCCP) and then the CO(2) group is transferred by the transcarboxylase to acetyl-CoA to form malonyl-CoA. This Pseudomonas fluorescens (strain Pf0-1) protein is Acetyl-coenzyme A carboxylase carboxyl transferase subunit beta.